Reading from the N-terminus, the 494-residue chain is Ubiquinol-cytochrome-c reductase complex core protein I, mitochondrial (494 aa).

His70 is a binding site for Zn(2+). Catalysis depends on Glu73, which acts as the Proton acceptor. Residues His74 and Glu150 each coordinate Zn(2+).

It belongs to the peptidase M16 family. UQCRC1/QCR1 subfamily. In terms of assembly, component of the ubiquinol-cytochrome c oxidoreductase (cytochrome b-c1 complex, complex III, CIII), a multisubunit enzyme composed of 10 subunits. The complex is composed of 3 respiratory subunits cytochrome b, cytochrome c1 and Rieske protein, 2 core protein subunits, and additional low-molecular weight protein subunits. The complex exists as an obligatory dimer and forms supercomplexes (SCs) in the inner mitochondrial membrane with cytochrome c oxidase (complex IV, CIV). Zn(2+) serves as cofactor. In terms of processing, the N-terminus is blocked.

It localises to the mitochondrion inner membrane. Functionally, component of the ubiquinol-cytochrome c oxidoreductase, a multisubunit transmembrane complex that is part of the mitochondrial electron transport chain which drives oxidative phosphorylation. The respiratory chain contains 3 multisubunit complexes succinate dehydrogenase (complex II, CII), ubiquinol-cytochrome c oxidoreductase (cytochrome b-c1 complex, complex III, CIII) and cytochrome c oxidase (complex IV, CIV), that cooperate to transfer electrons derived from NADH and succinate to molecular oxygen, creating an electrochemical gradient over the inner membrane that drives transmembrane transport and the ATP synthase. The cytochrome b-c1 complex catalyzes electron transfer from ubiquinol to cytochrome c, linking this redox reaction to translocation of protons across the mitochondrial inner membrane, with protons being carried across the membrane as hydrogens on the quinol. In the process called Q cycle, 2 protons are consumed from the matrix, 4 protons are released into the intermembrane space and 2 electrons are passed to cytochrome c. The protein is Ubiquinol-cytochrome-c reductase complex core protein I, mitochondrial of Euglena gracilis.